A 118-amino-acid polypeptide reads, in one-letter code: Small ribosomal subunit protein uS13 (118 aa).

Residues 93–118 (RNLPVRGQRSKTNARTRKGPRKPIKR) form a disordered region.

It belongs to the universal ribosomal protein uS13 family. As to quaternary structure, part of the 30S ribosomal subunit. Forms a loose heterodimer with protein S19. Forms two bridges to the 50S subunit in the 70S ribosome.

Functionally, located at the top of the head of the 30S subunit, it contacts several helices of the 16S rRNA. In the 70S ribosome it contacts the 23S rRNA (bridge B1a) and protein L5 of the 50S subunit (bridge B1b), connecting the 2 subunits; these bridges are implicated in subunit movement. Contacts the tRNAs in the A and P-sites. This Saccharophagus degradans (strain 2-40 / ATCC 43961 / DSM 17024) protein is Small ribosomal subunit protein uS13.